The following is a 322-amino-acid chain: 26S proteasome non-ATPase regulatory subunit 7 (322 aa).

The 136-residue stretch at 9-144 (VVVHPLVLLS…TEAYISVEEV (136 aa)) folds into the MPN domain. Residue Lys180 forms a Glycyl lysine isopeptide (Lys-Gly) (interchain with G-Cter in ubiquitin) linkage. An N6-acetyllysine mark is found at Lys204, Lys214, Lys314, and Lys315. Residues 281 to 322 (ANRDAEKKEGQEKEDSKKDRKDDKEKEKEKSDVKKEEKKEKK) form a disordered region.

The protein belongs to the peptidase M67A family. As to quaternary structure, component of the 19S proteasome regulatory particle complex. The 26S proteasome consists of a 20S core particle (CP) and two 19S regulatory subunits (RP). The regulatory particle is made of a lid composed of 9 subunits including PSMD7, a base containing 6 ATPases and few additional components. Within the complex, PSMD7 interacts with subunit PSMD4 through their respective MPN domain. Interacts with TRIM5.

Its function is as follows. Component of the 26S proteasome, a multiprotein complex involved in the ATP-dependent degradation of ubiquitinated proteins. This complex plays a key role in the maintenance of protein homeostasis by removing misfolded or damaged proteins, which could impair cellular functions, and by removing proteins whose functions are no longer required. Therefore, the proteasome participates in numerous cellular processes, including cell cycle progression, apoptosis, or DNA damage repair. The polypeptide is 26S proteasome non-ATPase regulatory subunit 7 (PSMD7) (Bos taurus (Bovine)).